The primary structure comprises 261 residues: NAD(P)H-quinone oxidoreductase subunit K, chloroplastic (261 aa).

C43, C44, C108, and C139 together coordinate [4Fe-4S] cluster.

Belongs to the complex I 20 kDa subunit family. In terms of assembly, NDH is composed of at least 16 different subunits, 5 of which are encoded in the nucleus. The cofactor is [4Fe-4S] cluster.

It is found in the plastid. The protein localises to the chloroplast thylakoid membrane. It catalyses the reaction a plastoquinone + NADH + (n+1) H(+)(in) = a plastoquinol + NAD(+) + n H(+)(out). It carries out the reaction a plastoquinone + NADPH + (n+1) H(+)(in) = a plastoquinol + NADP(+) + n H(+)(out). Functionally, NDH shuttles electrons from NAD(P)H:plastoquinone, via FMN and iron-sulfur (Fe-S) centers, to quinones in the photosynthetic chain and possibly in a chloroplast respiratory chain. The immediate electron acceptor for the enzyme in this species is believed to be plastoquinone. Couples the redox reaction to proton translocation, and thus conserves the redox energy in a proton gradient. In Cycas taitungensis (Prince sago), this protein is NAD(P)H-quinone oxidoreductase subunit K, chloroplastic.